The chain runs to 249 residues: NADH dehydrogenase [ubiquinone] flavoprotein 2, mitochondrial (249 aa).

The N-terminal 32 residues, 1–32 (MFFSAALRARAAGLTAHWGRHVRNLHKTAKQN), are a transit peptide targeting the mitochondrion. An N6-acetyllysine modification is found at Lys-61. Positions 135, 140, 176, and 180 each coordinate [2Fe-2S] cluster. A Phosphotyrosine; by SRC modification is found at Tyr-193. Residues 213-249 (IPKPGPRSGRFSCEPAGGLTSLTEPPKGPGFGVQAGL) form a disordered region.

It belongs to the complex I 24 kDa subunit family. In terms of assembly, core subunit of respiratory chain NADH dehydrogenase (Complex I) which is composed of 45 different subunits. This is a component of the flavoprotein-sulfur (FP) fragment of the enzyme. It depends on [2Fe-2S] cluster as a cofactor.

The protein resides in the mitochondrion inner membrane. The catalysed reaction is a ubiquinone + NADH + 5 H(+)(in) = a ubiquinol + NAD(+) + 4 H(+)(out). Functionally, core subunit of the mitochondrial membrane respiratory chain NADH dehydrogenase (Complex I) which catalyzes electron transfer from NADH through the respiratory chain, using ubiquinone as an electron acceptor. Parts of the peripheral arm of the enzyme, where the electrons from NADH are accepted by flavin mononucleotide (FMN) and then passed along a chain of iron-sulfur clusters by electron tunnelling to the final acceptor ubiquinone. Contains one iron-sulfur cluster. This is NADH dehydrogenase [ubiquinone] flavoprotein 2, mitochondrial from Pan troglodytes (Chimpanzee).